The sequence spans 1077 residues: RNA polymerase-associated protein CTR9 (1077 aa).

TPR repeat units lie at residues 56-89, 138-174, 183-216, 218-251, 298-332, 338-371, 373-405, 421-455, 462-495, 501-534, 540-572, 664-697, 699-731, 732-764, 768-801, and 830-863; these read KEHWLTIALAYCNHGKTNEGIKLIEMALDVFQNS, IGNMLATVELYYQRGHYDKALETSDLFVKSIHAEDHR, CLFLLLRAKLLYQKKNYMASLKIFQELLVINPVL, PDPRIGIGLCFWQLKDSKMAIKSWQRALQLNPKN, PVLLTLLQTYYYFKGDYQTVLDIYHHRILKMSPMI, SESSFWCGRAHYALGDYRKSFIMFQESLKKNEDN, LAKLGLGQTQIKNNLLEESIITFENLYKTNESL, FDAKTAKNTSAKEQSNLNEKALKYLERYLKLTLAT, SRAYLVISQLYELQNQYKTSLDYLSKALEEMEFI, LEVLNNLACYHFINGDFIKADDLFKQAKAKVSDK, ITLEYNIARTNEKNDCEKSESIYSQVTSLHPAY, GKKSRNPKEQEKSKHSYLKAIQLYQKVLQVDPFN, FAAQGLAIIFAESKRLGPALEILRKVRDSLDNE, DVQLNLAHCYLEMREYGKAIENYELVLKKFDNE, PHILNLLGRAWYARAIKERSVNFYQKALENAKTA, and AETLRRSNPKFRTVQQIKDSLEGLKEGLELFREL. Basic and acidic residues predominate over residues 959–980; that stretch reads EREAMAISEHNVKDDSDLSDKD. The interval 959 to 1077 is disordered; sequence EREAMAISEH…NDNDDNDGLF (119 aa). Residues S1015 and S1017 each carry the phosphoserine modification. Composition is skewed to acidic residues over residues 1042–1051 and 1063–1077; these read FIEDSDEEEA and DNDENNDNDDNDGLF.

As to quaternary structure, component of the PAF1 complex which consists of at least CDC73, CTR9, LEO1, PAF1 and RTF1. Interacts with SPT6. Interacts with FACT subunits POB3 and SPT16.

The protein localises to the nucleus. The protein resides in the nucleoplasm. Functionally, the PAF1 complex is a multifunctional complex. Involved in transcription initiation via genetic interactions with TATA-binding proteins. Involved in elongation. It regulates 3'-end formation of snR47 by modulating the recruitment or stable association of NRD1 and NAB3 with RNA polymerase II. Also has a role in transcription-coupled histone modification. Required for activation of RAD6 ubiquitin conjugate and the BRE1 ubiquitin ligase which ubiquitinate 'Lys-126' histone H2B. Activates the SET1 histone methyltransferase complex for methylation of 'Lys-4' of histone H3 and for methylation of 'Lys-73' of histone H3 by DOT1 and 'Lys-36' of histone H3 by SET2. In complex with PAF1, required for normal CLN1 and CLN2 G1 cyclin expression in late G1. Also has a role in chromosome segregation where it appears to be involved in microtubule placement. The polypeptide is RNA polymerase-associated protein CTR9 (CTR9) (Saccharomyces cerevisiae (strain ATCC 204508 / S288c) (Baker's yeast)).